The sequence spans 154 residues: Ribosome maturation factor RimP (154 aa).

This sequence belongs to the RimP family.

It localises to the cytoplasm. Functionally, required for maturation of 30S ribosomal subunits. The sequence is that of Ribosome maturation factor RimP from Flavobacterium psychrophilum (strain ATCC 49511 / DSM 21280 / CIP 103535 / JIP02/86).